The primary structure comprises 126 residues: MARIAGVDLPRRKHVAYALPYLFGIGRTLALQICEKTNIPQNKRVEELSDAEVKAIRDLLDAEYKVEGDLRREVQLNIKRLMDLGCYRGLRHRRGLPANGQRTHTNARTRKGPRKGMLQRRPAATK.

The tract at residues 92 to 126 (HRRGLPANGQRTHTNARTRKGPRKGMLQRRPAATK) is disordered. A compositionally biased stretch (basic residues) spans 105 to 118 (TNARTRKGPRKGML).

This sequence belongs to the universal ribosomal protein uS13 family. As to quaternary structure, part of the 30S ribosomal subunit. Forms a loose heterodimer with protein S19. Forms two bridges to the 50S subunit in the 70S ribosome.

Functionally, located at the top of the head of the 30S subunit, it contacts several helices of the 16S rRNA. In the 70S ribosome it contacts the 23S rRNA (bridge B1a) and protein L5 of the 50S subunit (bridge B1b), connecting the 2 subunits; these bridges are implicated in subunit movement. Contacts the tRNAs in the A and P-sites. This is Small ribosomal subunit protein uS13 from Sorangium cellulosum (strain So ce56) (Polyangium cellulosum (strain So ce56)).